Here is a 1001-residue protein sequence, read N- to C-terminus: Copper-transporting ATPase RAN1 (1001 aa).

Residues 1-21 (MAPSRRDLQLTPVTGGSSSQI) are disordered. Topologically, residues 1 to 298 (MAPSRRDLQL…TGEASNMFRR (298 aa)) are cytoplasmic. Residues 11–21 (TPVTGGSSSQI) are compositionally biased toward polar residues. 2 HMA domains span residues 56–122 (RKIQ…FEAE) and 133–199 (LVGQ…FEGS). Residues cysteine 67, cysteine 70, cysteine 144, and cysteine 147 each contribute to the Cu(+) site. In terms of domain architecture, HMA 3; degenerate spans 207-273 (DKLVLRVDGI…GIEEDGFGKF (67 aa)). The helical transmembrane segment at 299-320 (FISSLVLSIPLFFIQVICPHIA) threads the bilayer. Residues 321-338 (LFDALLVWRCGPFMMGDW) are Extracellular-facing. Residues 339-358 (LKWALVSVIQFVIGKRFYVA) traverse the membrane as a helical segment. Residues 359–365 (AWRALRN) are Cytoplasmic-facing. A helical membrane pass occupies residues 366–386 (GSTNMDVLVALGTSASYFYSV). Topologically, residues 387-403 (GALLYGAVTGFWSPTYF) are extracellular. Residues 404–424 (DASAMLITFVLLGKYLESLAK) traverse the membrane as a helical segment. Residues 425–558 (GKTSDAMKKL…KAPIQKFADY (134 aa)) are Cytoplasmic-facing. A helical membrane pass occupies residues 559-581 (VASIFVPVVITLALFTLVGWSIG). Over 582 to 602 (GAVGAYPDEWLPENGTHFVFS) the chain is Extracellular. A helical transmembrane segment spans residues 603 to 620 (LMFSISVVVIACPCALGL). Over 621-931 (ATPTAVMVAT…DLSRKTLTRI (311 aa)) the chain is Cytoplasmic. Aspartate 658 (4-aspartylphosphate intermediate) is an active-site residue. Positions 877 and 881 each coordinate Mg(2+). Residues 932–951 (RLNYVFAMAYNVVSIPIAAG) form a helical membrane-spanning segment. The Extracellular portion of the chain corresponds to 952-963 (VFFPVLRVQLPP). Residues 964–982 (WAAGACMALSSVSVVCSSL) form a helical membrane-spanning segment. Topologically, residues 983-1001 (LLRRYKKPRLTTVLKITTE) are cytoplasmic.

This sequence belongs to the cation transport ATPase (P-type) (TC 3.A.3) family. Type IB subfamily.

The protein resides in the membrane. The enzyme catalyses Cu(+)(in) + ATP + H2O = Cu(+)(out) + ADP + phosphate + H(+). Involved in copper import into the cell. Essential for ethylene signaling, which requires copper. Acts by delivering copper to create functional hormone receptors. This Arabidopsis thaliana (Mouse-ear cress) protein is Copper-transporting ATPase RAN1 (RAN1).